A 353-amino-acid polypeptide reads, in one-letter code: Probable cytochrome c oxidase subunit 2 (353 aa).

The N-terminal stretch at 1 to 42 (MTARELVCSQRVGQGLSRRLRPLVLAVTLGVLVVTLSGCSWS) is a signal peptide. Transmembrane regions (helical) follow at residues 63–83 (LWIGAVVASLVVGVIVWGLIF) and 110–130 (LVLTVTPFLIISMLFYFTVIV). Residues His-246, Cys-287, Cys-291, and His-295 each coordinate Cu cation.

This sequence belongs to the cytochrome c oxidase subunit 2 family. Cu cation is required as a cofactor. Heme serves as cofactor.

It is found in the cell membrane. The catalysed reaction is 4 Fe(II)-[cytochrome c] + O2 + 8 H(+)(in) = 4 Fe(III)-[cytochrome c] + 2 H2O + 4 H(+)(out). Functionally, subunits I and II form the functional core of the enzyme complex. Electrons originating in cytochrome c are transferred via heme a and Cu(A) to the binuclear center formed by heme a3 and Cu(B). This Mycobacterium leprae (strain TN) protein is Probable cytochrome c oxidase subunit 2 (ctaC).